The sequence spans 122 residues: Large ribosomal subunit protein uL14 (122 aa).

It belongs to the universal ribosomal protein uL14 family. Part of the 50S ribosomal subunit. Forms a cluster with proteins L3 and L19. In the 70S ribosome, L14 and L19 interact and together make contacts with the 16S rRNA in bridges B5 and B8.

Binds to 23S rRNA. Forms part of two intersubunit bridges in the 70S ribosome. The polypeptide is Large ribosomal subunit protein uL14 (Mycolicibacterium vanbaalenii (strain DSM 7251 / JCM 13017 / BCRC 16820 / KCTC 9966 / NRRL B-24157 / PYR-1) (Mycobacterium vanbaalenii)).